The sequence spans 253 residues: Acidic 26 kDa endochitinase (253 aa).

The signal sequence occupies residues 1 to 24 (MKFNIVSPVALSCLFFLFLTGTLA). Residue E92 is the Proton donor of the active site. An intrachain disulfide couples C212 to C244.

The protein belongs to the glycosyl hydrolase 19 family. Chitinase class II subfamily.

Its subcellular location is the secreted. It is found in the extracellular space. The enzyme catalyses Random endo-hydrolysis of N-acetyl-beta-D-glucosaminide (1-&gt;4)-beta-linkages in chitin and chitodextrins.. Functionally, defense against chitin-containing fungal pathogens. This is Acidic 26 kDa endochitinase (CHI3) from Solanum lycopersicum (Tomato).